Reading from the N-terminus, the 606-residue chain is Vacuolar calcium ion transporter (606 aa).

The disordered stretch occupies residues 1-110; the sequence is MSPPRRVSFP…NSLDPNPGLM (110 aa). The Cytoplasmic segment spans residues 1–137; it reads MSPPRRVSFP…PTYWGSMKAA (137 aa). The segment covering 18-30 has biased composition (low complexity); sequence PPLADSPLSSPKL. The segment covering 36–56 has biased composition (polar residues); the sequence is QSSSTPIVSSNLPTDTTNSAS. Residues 138–158 form a helical membrane-spanning segment; that stretch reads ITSTWLNVLLVFIPIGWALYL. Residues 159-170 are Vacuolar-facing; that stretch reads AKHNGGKDSISD. Residues 171–191 form a helical membrane-spanning segment; sequence TAVFCCTFIAIIPLAGLLGFA. At 192-204 the chain is on the cytoplasmic side; that stretch reads TEEAALRLGQTLG. The chain crosses the membrane as a helical span at residues 205–225; the sequence is GLLNATLGNAVELIVAILALI. The Vacuolar segment spans residues 226–236; it reads KCELQVVQSSL. The helical transmembrane segment at 237–257 threads the bilayer; that stretch reads VGSILSNILLVLGMCFFAGGV. The Cytoplasmic segment spans residues 258 to 272; sequence RFAEQAIKSTAAQLN. Residues 273-293 form a helical membrane-spanning segment; it reads ASLLLIAVIAVLIPSAFHFSI. Over 294 to 313 the chain is Vacuolar; that stretch reads SSSTSNTDASELANGEGADL. A helical transmembrane segment spans residues 314–334; that stretch reads LSMSHAVSILLLILYLGYLLF. The Cytoplasmic segment spans residues 335–437; that stretch reads QMWTHATYYV…EEEEETPQMN (103 aa). The interval 376–434 is disordered; the sequence is DEEESYSTATTVSDAAVPPSARAEGGEVPATHGPGTAAAETGNRVEHEDAEEEEEEETP. Over residues 423–433 the composition is skewed to acidic residues; it reads EDAEEEEEEET. A helical membrane pass occupies residues 438–458; that stretch reads VVCTIALMVIDTVLVGVTAEF. Over 459 to 477 the chain is Vacuolar; that stretch reads LVDSINGMVESNPSLSAEW. Residues 478-498 traverse the membrane as a helical segment; that stretch reads VGLILLPIVGNAAEHFTAVSV. Topologically, residues 499–505 are cytoplasmic; the sequence is SVKDKLD. Residues 506–526 form a helical membrane-spanning segment; sequence LSISVAVGSSIQIALFVIPVI. Topologically, residues 527–535 are vacuolar; sequence ELLAWTIGK. Residues 536–556 traverse the membrane as a helical segment; sequence PMTLLFDPYESIVLFLSVLIV. Residues 557 to 566 lie on the Cytoplasmic side of the membrane; the sequence is NQTLADGRSN. Residues 567-587 form a helical membrane-spanning segment; that stretch reads WMEGMVLMMLYIIIAVSFWYY. Topologically, residues 588 to 606 are vacuolar; that stretch reads PGSTTATLLGCQDSSSVTG.

This sequence belongs to the Ca(2+):cation antiporter (CaCA) (TC 2.A.19) family.

Its subcellular location is the vacuole membrane. Its function is as follows. Has a role in promoting intracellular calcium ion sequestration via the exchange of calcium ions for hydrogen ions across the vacuolar membrane. The sequence is that of Vacuolar calcium ion transporter from Cryptococcus neoformans var. grubii serotype A (strain H99 / ATCC 208821 / CBS 10515 / FGSC 9487) (Filobasidiella neoformans var. grubii).